Reading from the N-terminus, the 551-residue chain is Formate--tetrahydrofolate ligase (551 aa).

An ATP-binding site is contributed by 65–72 (TPAGEGKT).

Belongs to the formate--tetrahydrofolate ligase family.

The enzyme catalyses (6S)-5,6,7,8-tetrahydrofolate + formate + ATP = (6R)-10-formyltetrahydrofolate + ADP + phosphate. Its pathway is one-carbon metabolism; tetrahydrofolate interconversion. This is Formate--tetrahydrofolate ligase from Thermosipho africanus (strain TCF52B).